The primary structure comprises 288 residues: MNEDTTTLVEETNTTTQAALRQLSQTTPLVNAITNDVTVNQVANIILHWGGLPVMSDDVRELDEMVNAAEACLLNMGTVSETGEEAMMTAGQAASEHDAGLVLDPVGAGATATRSRVAERLSTTLDVDVINGNRGEVAALVGEDAEVRGVESVGEHPDAAETAIACAQHTEAVVVSSGVTDIVATAETAFELNVGDEMLGTLVGTGCMLGGTIAAFCGGLDDPLTAALTGTVAFGLAGEAAANGEFGEYAGPASYETTVLDAAAGTDPEMIAAVDIDNRVNRVLAEAK.

M55 is a substrate binding site. ATP-binding residues include N131 and S177. Residue G204 coordinates substrate.

Belongs to the Thz kinase family. Mg(2+) is required as a cofactor.

It catalyses the reaction 5-(2-hydroxyethyl)-4-methylthiazole + ATP = 4-methyl-5-(2-phosphooxyethyl)-thiazole + ADP + H(+). Its pathway is cofactor biosynthesis; thiamine diphosphate biosynthesis; 4-methyl-5-(2-phosphoethyl)-thiazole from 5-(2-hydroxyethyl)-4-methylthiazole: step 1/1. Catalyzes the phosphorylation of the hydroxyl group of 4-methyl-5-beta-hydroxyethylthiazole (THZ). In Haloquadratum walsbyi (strain DSM 16790 / HBSQ001), this protein is Hydroxyethylthiazole kinase.